The chain runs to 578 residues: PTS system fructose-specific EIIB'BC component (578 aa).

2 consecutive PTS EIIB type-2 domains span residues 1–99 (MSKI…EALA) and 119–214 (VVAI…AALA). Residue Cys-125 is the Phosphocysteine intermediate; for EIIB activity of the active site. Cys-125 carries the post-translational modification Phosphocysteine; by EIIA. One can recognise a PTS EIIC type-2 domain in the interval 241-576 (PYMHLLTGVS…KKPIPAEERA (336 aa)). 9 helical membrane-spanning segments follow: residues 251–271 (YMLP…VFGI), 284–304 (LMAI…AGFI), 319–339 (IGGM…VAGF), 364–384 (VLIL…YVVG), 405–425 (NAVV…GGPI), 428–450 (AAYT…AVMA), 477–497 (AGGA…IPFA), 518–538 (LSMA…VLAI), and 545–565 (LGLY…LLIA).

The protein resides in the cell inner membrane. It carries out the reaction D-fructose(out) + N(pros)-phospho-L-histidyl-[protein] = D-fructose 1-phosphate(in) + L-histidyl-[protein]. Functionally, the phosphoenolpyruvate-dependent sugar phosphotransferase system (sugar PTS), a major carbohydrate active transport system, catalyzes the phosphorylation of incoming sugar substrates concomitantly with their translocation across the cell membrane. The enzyme II FruAB PTS system is involved in fructose transport. This is PTS system fructose-specific EIIB'BC component from Rhodobacter capsulatus (Rhodopseudomonas capsulata).